A 521-amino-acid polypeptide reads, in one-letter code: MAP kinase-activated protein kinase mak-1 (521 aa).

Acidic residues predominate over residues 1–12; the sequence is MMFEYEEDEDPM. Residues 1-36 are disordered; that stretch reads MMFEYEEDEDPMEQQKHEEFKHHSTDHSGSPQENPF. Basic and acidic residues predominate over residues 13–26; that stretch reads EQQKHEEFKHHSTD. The Protein kinase domain maps to 144 to 405; it reads TISAEIIGIG…IHELMATPLV (262 aa). ATP is bound by residues 150–158 and Lys-173; that span reads IGIGESGKV. Catalysis depends on Asp-266, which acts as the Proton acceptor.

Belongs to the protein kinase superfamily. CAMK Ser/Thr protein kinase family. May interact (via protein kinase domain) with unc-22 (via protein kinase and CRD domains). It depends on Mg(2+) as a cofactor. Autophosphorylated in vitro. As to expression, expressed in body wall muscles (at protein level). Expressed in intestine.

The protein resides in the cytoplasm. The protein localises to the myofibril. It is found in the sarcomere. It localises to the a band. The catalysed reaction is L-seryl-[protein] + ATP = O-phospho-L-seryl-[protein] + ADP + H(+). The enzyme catalyses L-threonyl-[protein] + ATP = O-phospho-L-threonyl-[protein] + ADP + H(+). In terms of biological role, serine/threonine-protein kinase which may play a role in body wall muscle contraction. May phosphorylate unc-22/twitchin. The chain is MAP kinase-activated protein kinase mak-1 from Caenorhabditis elegans.